Here is a 152-residue protein sequence, read N- to C-terminus: Small ribosomal subunit protein uS13 (152 aa).

The protein belongs to the universal ribosomal protein uS13 family.

It localises to the cytoplasm. In terms of biological role, located at the top of the head of the 40S subunit, it contacts several helices of the 18S rRNA. The polypeptide is Small ribosomal subunit protein uS13 (RPS18) (Argopecten irradians (Bay scallop)).